The following is a 427-amino-acid chain: Adenylosuccinate synthetase (427 aa).

GTP is bound by residues 12–18 (GDEGKGK) and 40–42 (GHT). The Proton acceptor role is filled by D13. Positions 13 and 40 each coordinate Mg(2+). Residues 13–16 (DEGK), 38–41 (NAGH), T128, R142, Q223, T238, and R302 contribute to the IMP site. H41 acts as the Proton donor in catalysis. Residue 298–304 (TTTGRAR) participates in substrate binding. Residues R304, 330–332 (KLD), and 412–414 (AVG) contribute to the GTP site.

Belongs to the adenylosuccinate synthetase family. In terms of assembly, homodimer. Mg(2+) is required as a cofactor.

It is found in the cytoplasm. It catalyses the reaction IMP + L-aspartate + GTP = N(6)-(1,2-dicarboxyethyl)-AMP + GDP + phosphate + 2 H(+). It functions in the pathway purine metabolism; AMP biosynthesis via de novo pathway; AMP from IMP: step 1/2. In terms of biological role, plays an important role in the de novo pathway of purine nucleotide biosynthesis. Catalyzes the first committed step in the biosynthesis of AMP from IMP. This chain is Adenylosuccinate synthetase, found in Desulfitobacterium hafniense (strain Y51).